The primary structure comprises 323 residues: Calcium homeostasis modulator protein 2 (323 aa).

Residues 1–21 (MAALIAENFRFLSLFFKSKDV) are Cytoplasmic-facing. Residues 14 to 39 (LFFKSKDVMIFNGLVALGTVGSQELF) are central pore. Residues 22–43 (MIFNGLVALGTVGSQELFSVVA) form a helical membrane-spanning segment. The Extracellular segment spans residues 44 to 52 (FHCPCSPAR). Disulfide bonds link cysteine 46-cysteine 130 and cysteine 48-cysteine 162. The helical transmembrane segment at 53–76 (NYLYGLAAIGVPALVLFIIGIILN) threads the bilayer. Topologically, residues 77–101 (NHTWNLVAECQHRRTKNCSAAPTFL) are cytoplasmic. Residues 102–132 (LLSSILGRAAVAPVTWSVISLLRGEAYVCAL) traverse the membrane as a helical segment. Residues 133–179 (SEFVDPSSLTAREEHFPSAHATEILARFPCKENPDNLSDFREEVSRR) are Extracellular-facing. The segment at 145–152 (EEHFPSAH) is hemichannel docking. A helical transmembrane segment spans residues 180–206 (LRYESQLFGWLLIGVVAILVFLTKCLK). Topologically, residues 207–323 (HYCSPLSYRQ…DNVEMALLPS (117 aa)) are cytoplasmic. Positions 214-251 (YRQEAYWAQYRANEDQLFQRTAEVHSRVLAANNVRRFF) are intersubunit interaction.

This sequence belongs to the CALHM family. As to quaternary structure, homo-undecamer. Two undecameric hemichannels can assemble in a head-to-head manner to form a gap junction. As to expression, placenta.

It localises to the cell membrane. The enzyme catalyses ATP(in) = ATP(out). With respect to regulation, inhibited by Ca(2+) and ruthenium red in a voltage-dependent way. Its function is as follows. Pore-forming subunit of Ca(2+) homeostasis modulator channels. Mediates ATP release from astrocytes and ATP-induced Ca(2+) influx in microglia thus regulating neuronal ATP and Ca(2+) homeostasis, synaptic transmission and neuroinflammatory response. May form intercellular gap junctions. The gating mechanism remains unknown. This chain is Calcium homeostasis modulator protein 2, found in Homo sapiens (Human).